The chain runs to 294 residues: uncharacterized protein (294 aa).

Residues 5-25 (ILIILIIIIIVIISLIYLKNF) form a helical membrane-spanning segment. Residues N151, N170, N205, and N271 are each glycosylated (N-linked (GlcNAc...) asparagine; by host).

The protein resides in the membrane. This is an uncharacterized protein from Acanthamoeba polyphaga (Amoeba).